Consider the following 158-residue polypeptide: Xanthine-guanine phosphoribosyltransferase (158 aa).

Residues 38 to 39 and 90 to 98 contribute to the 5-phospho-alpha-D-ribose 1-diphosphate site; these read RG and DDLVDTGGT. Asp91 contributes to the Mg(2+) binding site. Residues Asp94 and Ile137 each contribute to the guanine site. Asp94 and Ile137 together coordinate xanthine. GMP contacts are provided by residues 94-98 and 136-137; these read DTGGT and WI.

Belongs to the purine/pyrimidine phosphoribosyltransferase family. XGPT subfamily. Homotetramer. Mg(2+) serves as cofactor.

Its subcellular location is the cell inner membrane. The catalysed reaction is GMP + diphosphate = guanine + 5-phospho-alpha-D-ribose 1-diphosphate. It catalyses the reaction XMP + diphosphate = xanthine + 5-phospho-alpha-D-ribose 1-diphosphate. It carries out the reaction IMP + diphosphate = hypoxanthine + 5-phospho-alpha-D-ribose 1-diphosphate. The protein operates within purine metabolism; GMP biosynthesis via salvage pathway; GMP from guanine: step 1/1. It functions in the pathway purine metabolism; XMP biosynthesis via salvage pathway; XMP from xanthine: step 1/1. In terms of biological role, purine salvage pathway enzyme that catalyzes the transfer of the ribosyl-5-phosphate group from 5-phospho-alpha-D-ribose 1-diphosphate (PRPP) to the N9 position of the 6-oxopurines guanine and xanthine to form the corresponding ribonucleotides GMP (guanosine 5'-monophosphate) and XMP (xanthosine 5'-monophosphate), with the release of PPi. To a lesser extent, also acts on hypoxanthine. The sequence is that of Xanthine-guanine phosphoribosyltransferase from Buchnera aphidicola subsp. Acyrthosiphon pisum (strain APS) (Acyrthosiphon pisum symbiotic bacterium).